The chain runs to 534 residues: GMP synthase [glutamine-hydrolyzing] (534 aa).

One can recognise a Glutamine amidotransferase type-1 domain in the interval 20–210 (PVLVIDFGAQ…LLVGAGCRPS (191 aa)). Catalysis depends on Cys-97, which acts as the Nucleophile. Residues His-184 and Glu-186 contribute to the active site. The 198-residue stretch at 211–408 (WTMINIVEEA…LGLPEDIVWR (198 aa)) folds into the GMPS ATP-PPase domain. Residue 238–244 (SGGVDSA) coordinates ATP.

In terms of assembly, homodimer.

It carries out the reaction XMP + L-glutamine + ATP + H2O = GMP + L-glutamate + AMP + diphosphate + 2 H(+). It participates in purine metabolism; GMP biosynthesis; GMP from XMP (L-Gln route): step 1/1. Functionally, catalyzes the synthesis of GMP from XMP. This is GMP synthase [glutamine-hydrolyzing] from Parafrankia sp. (strain EAN1pec).